A 200-amino-acid polypeptide reads, in one-letter code: Casparian strip membrane protein 2 (200 aa).

Residues 1–37 (MMKSDSVAIDVPESSSVAKRKAPFMANIRDENGGYKK) are Cytoplasmic-facing. Residues 38-58 (GLAIFDFILRLGAIAAALGAA) traverse the membrane as a helical segment. Over 59–88 (STMGTSDETLPFFTQFFQFNAGYDDFPTFQ) the chain is Extracellular. A helical membrane pass occupies residues 89–109 (FFVIAMAMVAGYLVLSLPFSI). The Cytoplasmic segment spans residues 110 to 121 (VSICRPHAAGPR). A helical membrane pass occupies residues 122-142 (ILLFILDTVALTLNAAAGAAA). Residues 143–175 (ADIVYLAHNGNQTTNWLAICLQFGDFCREVSGS) lie on the Extracellular side of the membrane. N-linked (GlcNAc...) asparagine glycosylation is present at Asn153. Residues 176–196 (VVASFASVVILMVLVVMSGLA) traverse the membrane as a helical segment. The Cytoplasmic segment spans residues 197–200 (LRRY).

Belongs to the Casparian strip membrane proteins (CASP) family. Homodimer and heterodimers.

It localises to the cell membrane. Its function is as follows. Regulates membrane-cell wall junctions and localized cell wall deposition. Required for establishment of the Casparian strip membrane domain (CSD) and the subsequent formation of Casparian strips, a cell wall modification of the root endodermis that determines an apoplastic barrier between the intraorganismal apoplasm and the extraorganismal apoplasm and prevents lateral diffusion. In Ricinus communis (Castor bean), this protein is Casparian strip membrane protein 2.